We begin with the raw amino-acid sequence, 140 residues long: Ribosome maturation factor RimP (140 aa).

This sequence belongs to the RimP family.

Its subcellular location is the cytoplasm. Functionally, required for maturation of 30S ribosomal subunits. The polypeptide is Ribosome maturation factor RimP (Campylobacter lari (strain RM2100 / D67 / ATCC BAA-1060)).